Here is a 389-residue protein sequence, read N- to C-terminus: 8-amino-7-oxononanoate synthase (389 aa).

Position 31 (Arg31) interacts with substrate. Residue 109-110 participates in pyridoxal 5'-phosphate binding; sequence GY. His134 contacts substrate. Pyridoxal 5'-phosphate is bound by residues Ser180, 205 to 208, and 236 to 239; these read DEAH and TLSK. Lys239 carries the post-translational modification N6-(pyridoxal phosphate)lysine. Residue Thr349 coordinates substrate.

It belongs to the class-II pyridoxal-phosphate-dependent aminotransferase family. BioF subfamily. In terms of assembly, homodimer. Pyridoxal 5'-phosphate is required as a cofactor.

The catalysed reaction is 6-carboxyhexanoyl-[ACP] + L-alanine + H(+) = (8S)-8-amino-7-oxononanoate + holo-[ACP] + CO2. Its pathway is cofactor biosynthesis; biotin biosynthesis. Catalyzes the decarboxylative condensation of pimeloyl-[acyl-carrier protein] and L-alanine to produce 8-amino-7-oxononanoate (AON), [acyl-carrier protein], and carbon dioxide. This Mycobacterium ulcerans (strain Agy99) protein is 8-amino-7-oxononanoate synthase.